The chain runs to 262 residues: NAC domain-containing protein 71 (262 aa).

An NAC domain is found at 6–160 (LPPGFRFHPT…AFALCRVVKK (155 aa)). A DNA-binding region spans residues 107–166 (AGYRKTLVFYEGRAPLGDRTNWFMHEYRLCDIDDHSQKSPNFKGAFALCRVVKKNELKKN).

The protein localises to the nucleus. Its function is as follows. Transcription factor involved in tissue reunion of wounded inflorescence stems. Required for the division of pith cells in the reunion process, which is dependent on polar-transported auxin and the wound-inducible hormones ethylene and jasmonate. Binds to the promoters of XTH19 and XTH20 to induce their expression via auxin signaling. XTH19 and XTH20 are involved in cell proliferation in the tissue reunion process of incised stems. Involved in hypocotyl graft union formation. Required for the auxin- mediated promotion of vascular tissue proliferation during hypocotyl graft attachment. The sequence is that of NAC domain-containing protein 71 from Arabidopsis thaliana (Mouse-ear cress).